The following is a 306-amino-acid chain: Acetaldehyde dehydrogenase 3 (306 aa).

The active-site Acyl-thioester intermediate is Cys131. NAD(+) contacts are provided by residues 162-170 and Asn273; that span reads SVGPGTRKN.

This sequence belongs to the acetaldehyde dehydrogenase family.

The catalysed reaction is acetaldehyde + NAD(+) + CoA = acetyl-CoA + NADH + H(+). This is Acetaldehyde dehydrogenase 3 from Burkholderia lata (strain ATCC 17760 / DSM 23089 / LMG 22485 / NCIMB 9086 / R18194 / 383).